Here is a 308-residue protein sequence, read N- to C-terminus: Ornithine carbamoyltransferase (308 aa).

Residues 56 to 59 (STRT), Q83, R107, and 134 to 137 (HPCQ) contribute to the carbamoyl phosphate site. L-ornithine contacts are provided by residues N165, D225, and 229–230 (SM). Residues 266–267 (CL) and R294 contribute to the carbamoyl phosphate site.

The protein belongs to the aspartate/ornithine carbamoyltransferase superfamily. OTCase family.

It is found in the cytoplasm. The catalysed reaction is carbamoyl phosphate + L-ornithine = L-citrulline + phosphate + H(+). It functions in the pathway amino-acid degradation; L-arginine degradation via ADI pathway; carbamoyl phosphate from L-arginine: step 2/2. Its function is as follows. Reversibly catalyzes the transfer of the carbamoyl group from carbamoyl phosphate (CP) to the N(epsilon) atom of ornithine (ORN) to produce L-citrulline. The chain is Ornithine carbamoyltransferase from Cereibacter sphaeroides (strain KD131 / KCTC 12085) (Rhodobacter sphaeroides).